Consider the following 132-residue polypeptide: Small ribosomal subunit protein uS8 (132 aa).

The protein belongs to the universal ribosomal protein uS8 family. In terms of assembly, part of the 30S ribosomal subunit. Contacts proteins S5 and S12.

Its function is as follows. One of the primary rRNA binding proteins, it binds directly to 16S rRNA central domain where it helps coordinate assembly of the platform of the 30S subunit. The sequence is that of Small ribosomal subunit protein uS8 from Streptococcus equi subsp. equi (strain 4047).